Here is an 89-residue protein sequence, read N- to C-terminus: Small ribosomal subunit protein uS15 (89 aa).

This sequence belongs to the universal ribosomal protein uS15 family. As to quaternary structure, part of the 30S ribosomal subunit. Forms a bridge to the 50S subunit in the 70S ribosome, contacting the 23S rRNA.

One of the primary rRNA binding proteins, it binds directly to 16S rRNA where it helps nucleate assembly of the platform of the 30S subunit by binding and bridging several RNA helices of the 16S rRNA. Functionally, forms an intersubunit bridge (bridge B4) with the 23S rRNA of the 50S subunit in the ribosome. This is Small ribosomal subunit protein uS15 from Pseudomonas aeruginosa (strain LESB58).